The primary structure comprises 252 residues: Imidazole glycerol phosphate synthase subunit HisF (252 aa).

Active-site residues include Asp11 and Asp130.

It belongs to the HisA/HisF family. Heterodimer of HisH and HisF.

It localises to the cytoplasm. The catalysed reaction is 5-[(5-phospho-1-deoxy-D-ribulos-1-ylimino)methylamino]-1-(5-phospho-beta-D-ribosyl)imidazole-4-carboxamide + L-glutamine = D-erythro-1-(imidazol-4-yl)glycerol 3-phosphate + 5-amino-1-(5-phospho-beta-D-ribosyl)imidazole-4-carboxamide + L-glutamate + H(+). The protein operates within amino-acid biosynthesis; L-histidine biosynthesis; L-histidine from 5-phospho-alpha-D-ribose 1-diphosphate: step 5/9. Functionally, IGPS catalyzes the conversion of PRFAR and glutamine to IGP, AICAR and glutamate. The HisF subunit catalyzes the cyclization activity that produces IGP and AICAR from PRFAR using the ammonia provided by the HisH subunit. The sequence is that of Imidazole glycerol phosphate synthase subunit HisF from Lacticaseibacillus casei (strain BL23) (Lactobacillus casei).